The chain runs to 158 residues: Ribosome maturation factor RimP (158 aa).

Belongs to the RimP family.

It is found in the cytoplasm. Required for maturation of 30S ribosomal subunits. In Streptococcus suis (strain 05ZYH33), this protein is Ribosome maturation factor RimP.